The primary structure comprises 99 residues: EPIDERMAL PATTERNING FACTOR-like protein 8 (99 aa).

An N-terminal signal peptide occupies residues 1 to 35; that stretch reads MDSSRKYKRCGFGAALFVANIFFSLLSLHCISGAH. Cystine bridges form between Cys53-Cys90, Cys57-Cys63, and Cys60-Cys92.

It belongs to the plant cysteine rich small secretory peptide family. Epidermal patterning factor subfamily.

Its subcellular location is the secreted. Its function is as follows. Controls stomatal patterning. In Arabidopsis thaliana (Mouse-ear cress), this protein is EPIDERMAL PATTERNING FACTOR-like protein 8.